The primary structure comprises 75 residues: Conotoxin Vc6a (75 aa).

Residues 1–22 (MKLTCVVIVAVLFLTANTFATA) form the signal peptide. The propeptide occupies 23–49 (DDPRNGLENLFLKAHHEMNPEASKLNE). 3 cysteine pairs are disulfide-bonded: Cys51–Cys66, Cys58–Cys69, and Cys65–Cys74.

Expressed by the venom duct.

It is found in the secreted. This is Conotoxin Vc6a from Conus victoriae (Queen Victoria cone).